We begin with the raw amino-acid sequence, 57 residues long: MIKWAIIFFIISLVAGLFGFTNISAGAAGIAKVLFFIALAIFLIVLIFGVGLGMLVF.

Helical transmembrane passes span Met-1 to Thr-21 and Val-33 to Gly-53.

It belongs to the UPF0391 family.

It localises to the cell membrane. The protein is UPF0391 membrane protein azo1765 of Azoarcus sp. (strain BH72).